The primary structure comprises 544 residues: Chaperonin GroEL 1 (544 aa).

Residues 29–32, 86–90, glycine 413, 482–484, and aspartate 498 each bind ATP; these read TLGP, DGTTT, and NVL.

The protein belongs to the chaperonin (HSP60) family. Forms a cylinder of 14 subunits composed of two heptameric rings stacked back-to-back. Interacts with the co-chaperonin GroES.

The protein resides in the cytoplasm. The catalysed reaction is ATP + H2O + a folded polypeptide = ADP + phosphate + an unfolded polypeptide.. Functionally, together with its co-chaperonin GroES, plays an essential role in assisting protein folding. The GroEL-GroES system forms a nano-cage that allows encapsulation of the non-native substrate proteins and provides a physical environment optimized to promote and accelerate protein folding. This Chloroflexus aurantiacus (strain ATCC 29366 / DSM 635 / J-10-fl) protein is Chaperonin GroEL 1.